A 174-amino-acid polypeptide reads, in one-letter code: uncharacterized protein (174 aa).

It belongs to the NAD(P)H dehydrogenase (quinone) family.

This is an uncharacterized protein from Bacillus subtilis (strain 168).